The primary structure comprises 257 residues: Phosphonates import ATP-binding protein PhnC (257 aa).

One can recognise an ABC transporter domain in the interval 2 to 246 (IEFRNVSKVY…KFAEIYGDVA (245 aa)). 35–42 (GLSGAGKS) contributes to the ATP binding site.

It belongs to the ABC transporter superfamily. Phosphonates importer (TC 3.A.1.9.1) family. As to quaternary structure, the complex is composed of two ATP-binding proteins (PhnC), two transmembrane proteins (PhnE) and a solute-binding protein (PhnD).

It localises to the cell membrane. The catalysed reaction is phosphonate(out) + ATP + H2O = phosphonate(in) + ADP + phosphate + H(+). Its function is as follows. Part of the ABC transporter complex PhnCDE involved in phosphonates import. Responsible for energy coupling to the transport system. The protein is Phosphonates import ATP-binding protein PhnC of Bacillus cereus (strain ATCC 14579 / DSM 31 / CCUG 7414 / JCM 2152 / NBRC 15305 / NCIMB 9373 / NCTC 2599 / NRRL B-3711).